The following is a 162-amino-acid chain: Ciliary microtubule inner protein 5 (162 aa).

Residues 1–44 (MGSHPTPGLQRTTSAGYRLPPTRPPASVSPAARGGPMASRGLAG) are disordered.

The protein resides in the cell projection. It localises to the cilium. The protein is Ciliary microtubule inner protein 5 of Homo sapiens (Human).